We begin with the raw amino-acid sequence, 2215 residues long: Unconventional myosin-VIIa (2215 aa).

A Myosin motor domain is found at H65–D741. G158–T165 is a binding site for ATP. The segment at F632 to N639 is actin-binding. IQ domains follow at residues T745–L765, K768–G788, R791–R811, R814–R834, and L837–Q857. Positions R858–E935 are SAH. The MyTH4 1 domain maps to Y1017–K1253. The FERM 1 domain occupies I1258 to R1602. S1569 is subject to Phosphoserine. T1571 carries the post-translational modification Phosphothreonine. The SH3 domain occupies K1603 to T1672. The MyTH4 2 domain occupies H1747 to Q1896. The FERM 2 domain occupies I1902–M2205.

This sequence belongs to the TRAFAC class myosin-kinesin ATPase superfamily. Myosin family. In terms of assembly, might homodimerize in a two headed molecule through the formation of a coiled-coil rod. Identified in a complex with USH1C and USH1G. Interacts with MYRIP. Interacts with RPE65. Interacts with CIB2. May interact with CALM. Interacts with WHRN. Interacts with PLEKHB1 (via PH domain). Interacts with PCDH15. Interacts with TWF2. Interacts with USH1G. Interacts with MYH9. Interacts (via MyTH4-FERM domains) with cytoplasmic regions of ADGRV1 and USH2A. Interacts with PDZD7 (via MyTH4-FERM domains). Interacts with CALML4. In terms of tissue distribution, expressed in the pigment epithelium and the photoreceptor cells of the retina. Also found in kidney, liver, testis, cochlea, lymphocytes. Not expressed in brain.

It localises to the cytoplasm. The protein resides in the cell cortex. It is found in the cytoskeleton. Its subcellular location is the synapse. With respect to regulation, ATP hydrolysis is inhibited by Mg(2+), already at a concentration of 0.4 mM. Functionally, myosins are actin-based motor molecules with ATPase activity. Unconventional myosins serve in intracellular movements. Their highly divergent tails bind to membranous compartments, which are then moved relative to actin filaments. In the retina, plays an important role in the renewal of the outer photoreceptor disks. Plays an important role in the distribution and migration of retinal pigment epithelial (RPE) melanosomes and phagosomes, and in the regulation of opsin transport in retinal photoreceptors. In the inner ear, plays an important role in differentiation, morphogenesis and organization of cochlear hair cell bundles. Involved in hair-cell vesicle trafficking of aminoglycosides, which are known to induce ototoxicity. Motor protein that is a part of the functional network formed by USH1C, USH1G, CDH23 and MYO7A that mediates mechanotransduction in cochlear hair cells. Required for normal hearing. In Homo sapiens (Human), this protein is Unconventional myosin-VIIa.